The chain runs to 502 residues: Exodeoxyribonuclease 7 large subunit (502 aa).

Positions 474–495 (SAPSTTKKSAPKPAAPKAPKTP) are enriched in low complexity. Residues 474–502 (SAPSTTKKSAPKPAAPKAPKTPGEQGSLF) form a disordered region.

The protein belongs to the XseA family. As to quaternary structure, heterooligomer composed of large and small subunits.

The protein resides in the cytoplasm. It catalyses the reaction Exonucleolytic cleavage in either 5'- to 3'- or 3'- to 5'-direction to yield nucleoside 5'-phosphates.. Its function is as follows. Bidirectionally degrades single-stranded DNA into large acid-insoluble oligonucleotides, which are then degraded further into small acid-soluble oligonucleotides. The protein is Exodeoxyribonuclease 7 large subunit of Ruegeria sp. (strain TM1040) (Silicibacter sp.).